An 87-amino-acid chain; its full sequence is Omega-lycotoxin-Am1a (87 aa).

The first 17 residues, 1-17 (MKLSIFFVLFFIAIAYC), serve as a signal peptide directing secretion. A propeptide spanning residues 18-40 (QPEFLDDEEDEVEETLPVAEEGR) is cleaved from the precursor. 4 disulfide bridges follow: cysteine 44-cysteine 59, cysteine 51-cysteine 64, cysteine 58-cysteine 84, and cysteine 66-cysteine 82.

The protein belongs to the neurotoxin omega-lctx family. Expressed by the venom gland.

It is found in the secreted. In terms of biological role, modulates Cav2.1/CACNA1A voltage-gated calcium channels (P/Q-type currents) in rat cerebellar Purkinje cells and hippocampal CA1-CA3 neurons. At saturating concentrations (&gt;10 nM) decelerates activation kinetics and slightly increases peak amplitude without affecting deactivation kinetics. In vivo, does not cause death when intravenously injected into mice. In rat models, through its activity on Cav2.1/CACNA1A, has an ameliorative effect on memory defects provoked by hyperstimulation of N-methyl-D-aspartate receptors (NMDARs) in the hippocampus. In Alopecosa marikovskyi (Wolf spider), this protein is Omega-lycotoxin-Am1a.